The chain runs to 447 residues: NADH peroxidase (447 aa).

FAD contacts are provided by residues 7–11, Glu32, Cys42, 110–113, and Arg132; these read GSSHG and SPGA. His10 acts as the Proton acceptor in catalysis. Residue Cys42 is the Redox-active of the active site. Cys42 carries the cysteine sulfenic acid (-SOH) modification. Ile160, Asp179, Tyr188, and Gly243 together coordinate NAD(+). Asp281 serves as a coordination point for FAD. Ala297 contacts NAD(+). Ala299 contacts FAD. An NAD(+)-binding site is contributed by Gly328.

This sequence belongs to the class-III pyridine nucleotide-disulfide oxidoreductase family. As to quaternary structure, homotetramer. The cofactor is FAD.

The catalysed reaction is H2O2 + NADH + H(+) = NAD(+) + 2 H2O. Its function is as follows. Peroxidase whose active site is a redox-active cysteine-sulfenic acid. The sequence is that of NADH peroxidase (npr) from Enterococcus faecalis (strain ATCC 700802 / V583).